The following is a 169-amino-acid chain: Cell division inhibitor SulA (169 aa).

The segment at 106–112 (ALRTGNY) is ftsZ binding. The interval 162-169 (KIHSNLYH) is lon protease binding.

It belongs to the SulA family. As to quaternary structure, interacts with FtsZ. Is rapidly cleaved and degraded by the Lon protease once DNA damage is repaired.

Its function is as follows. Component of the SOS system and an inhibitor of cell division. Accumulation of SulA causes rapid cessation of cell division and the appearance of long, non-septate filaments. In the presence of GTP, binds a polymerization-competent form of FtsZ in a 1:1 ratio, thus inhibiting FtsZ polymerization and therefore preventing it from participating in the assembly of the Z ring. This mechanism prevents the premature segregation of damaged DNA to daughter cells during cell division. The protein is Cell division inhibitor SulA of Shigella boydii serotype 4 (strain Sb227).